Here is a 136-residue protein sequence, read N- to C-terminus: Large ribosomal subunit protein uL16 (136 aa).

This sequence belongs to the universal ribosomal protein uL16 family. As to quaternary structure, part of the 50S ribosomal subunit.

Its function is as follows. Binds 23S rRNA and is also seen to make contacts with the A and possibly P site tRNAs. This is Large ribosomal subunit protein uL16 from Aggregatibacter actinomycetemcomitans (Actinobacillus actinomycetemcomitans).